We begin with the raw amino-acid sequence, 398 residues long: NADH-quinone oxidoreductase subunit D (398 aa).

The protein belongs to the complex I 49 kDa subunit family. NDH-1 is composed of 14 different subunits. Subunits NuoB, C, D, E, F, and G constitute the peripheral sector of the complex.

The protein resides in the cell inner membrane. It carries out the reaction a quinone + NADH + 5 H(+)(in) = a quinol + NAD(+) + 4 H(+)(out). In terms of biological role, NDH-1 shuttles electrons from NADH, via FMN and iron-sulfur (Fe-S) centers, to quinones in the respiratory chain. The immediate electron acceptor for the enzyme in this species is believed to be ubiquinone. Couples the redox reaction to proton translocation (for every two electrons transferred, four hydrogen ions are translocated across the cytoplasmic membrane), and thus conserves the redox energy in a proton gradient. This chain is NADH-quinone oxidoreductase subunit D, found in Bradyrhizobium sp. (strain ORS 278).